We begin with the raw amino-acid sequence, 346 residues long: Holliday junction branch migration complex subunit RuvB (346 aa).

Residues 1 to 182 form a large ATPase domain (RuvB-L) region; it reads MTRVISGEPQ…FGIPIRLEFY (182 aa). The ATP site is built by L21, R22, G63, K66, T67, T68, R172, Y182, and R219. T67 is a binding site for Mg(2+). The tract at residues 183-253 is small ATPAse domain (RuvB-S); the sequence is TPAELRHVLQ…AAAMALARLE (71 aa). Positions 256-346 are head domain (RuvB-H); sequence ESGLDSLDRR…QAQGALFDEG (91 aa). R292, R311, and R316 together coordinate DNA.

This sequence belongs to the RuvB family. As to quaternary structure, homohexamer. Forms an RuvA(8)-RuvB(12)-Holliday junction (HJ) complex. HJ DNA is sandwiched between 2 RuvA tetramers; dsDNA enters through RuvA and exits via RuvB. An RuvB hexamer assembles on each DNA strand where it exits the tetramer. Each RuvB hexamer is contacted by two RuvA subunits (via domain III) on 2 adjacent RuvB subunits; this complex drives branch migration. In the full resolvosome a probable DNA-RuvA(4)-RuvB(12)-RuvC(2) complex forms which resolves the HJ.

Its subcellular location is the cytoplasm. The catalysed reaction is ATP + H2O = ADP + phosphate + H(+). Its function is as follows. The RuvA-RuvB-RuvC complex processes Holliday junction (HJ) DNA during genetic recombination and DNA repair, while the RuvA-RuvB complex plays an important role in the rescue of blocked DNA replication forks via replication fork reversal (RFR). RuvA specifically binds to HJ cruciform DNA, conferring on it an open structure. The RuvB hexamer acts as an ATP-dependent pump, pulling dsDNA into and through the RuvAB complex. RuvB forms 2 homohexamers on either side of HJ DNA bound by 1 or 2 RuvA tetramers; 4 subunits per hexamer contact DNA at a time. Coordinated motions by a converter formed by DNA-disengaged RuvB subunits stimulates ATP hydrolysis and nucleotide exchange. Immobilization of the converter enables RuvB to convert the ATP-contained energy into a lever motion, pulling 2 nucleotides of DNA out of the RuvA tetramer per ATP hydrolyzed, thus driving DNA branch migration. The RuvB motors rotate together with the DNA substrate, which together with the progressing nucleotide cycle form the mechanistic basis for DNA recombination by continuous HJ branch migration. Branch migration allows RuvC to scan DNA until it finds its consensus sequence, where it cleaves and resolves cruciform DNA. In Caulobacter vibrioides (strain ATCC 19089 / CIP 103742 / CB 15) (Caulobacter crescentus), this protein is Holliday junction branch migration complex subunit RuvB.